The sequence spans 129 residues: Glycine cleavage system H protein (129 aa).

The Lipoyl-binding domain maps to 24 to 106 (LLKIGVSEFA…IGNGWLLIIK (83 aa)). At lysine 65 the chain carries N6-lipoyllysine.

The protein belongs to the GcvH family. The glycine cleavage system is composed of four proteins: P, T, L and H. (R)-lipoate is required as a cofactor.

Its function is as follows. The glycine cleavage system catalyzes the degradation of glycine. The H protein shuttles the methylamine group of glycine from the P protein to the T protein. This Prochlorococcus marinus (strain MIT 9515) protein is Glycine cleavage system H protein.